Reading from the N-terminus, the 69-residue chain is uncharacterized protein (69 aa).

The stretch at 21 to 64 forms a coiled coil; sequence LNLLKGGEEKISEVELKLDEMEKKMDSLLVQLEDLHRDNNDLAK.

This is an uncharacterized protein from Saccharomyces cerevisiae (strain ATCC 204508 / S288c) (Baker's yeast).